Consider the following 262-residue polypeptide: 3-methyl-2-oxobutanoate hydroxymethyltransferase (262 aa).

Mg(2+) contacts are provided by D44 and D83. Residues D44–S45, D83, and K113 each bind 3-methyl-2-oxobutanoate. E115 lines the Mg(2+) pocket. The Proton acceptor role is filled by E182.

Belongs to the PanB family. As to quaternary structure, homodecamer; pentamer of dimers. It depends on Mg(2+) as a cofactor.

It localises to the cytoplasm. It carries out the reaction 3-methyl-2-oxobutanoate + (6R)-5,10-methylene-5,6,7,8-tetrahydrofolate + H2O = 2-dehydropantoate + (6S)-5,6,7,8-tetrahydrofolate. The protein operates within cofactor biosynthesis; (R)-pantothenate biosynthesis; (R)-pantoate from 3-methyl-2-oxobutanoate: step 1/2. Functionally, catalyzes the reversible reaction in which hydroxymethyl group from 5,10-methylenetetrahydrofolate is transferred onto alpha-ketoisovalerate to form ketopantoate. This chain is 3-methyl-2-oxobutanoate hydroxymethyltransferase, found in Picosynechococcus sp. (strain ATCC 27264 / PCC 7002 / PR-6) (Agmenellum quadruplicatum).